Reading from the N-terminus, the 394-residue chain is MQPRKIVILGSTGSIGTQAIDVVDAAPHRFEVVALSAGGGNLALIAQQAVHTRAQAVGIAQGDQGALRQLIAAAAAAAGVRNFAPEIFVGPDASTRIAAIECDVVLNGITGSIGLAPTLAALGTGATLALANKESLIVGGALVKAAASPGQIVPVDSEHSAIAQCLRSGTDQEVEKLILTASGGPFRGRSREQLHDVTPQEALAHPTWDMGLMVTTNSASLVNKGLEVIEAHLLFDVPLDRIDVVVHPQSVVHSMVQFVDGSIIAQASPPDMRLPIALGLGWPDRVPRAAQACDWTQATSWTFEPLDTVAFPAVDLAKDAAKQGSTFPAVFNAANEEAVEAFHAGRIRFTQIVDTVESVLSEHSGSSELTVESVLDAEKWARARTLDRLATSAL.

Residues T12, G13, S14, I15, G38, N41, and N132 each contribute to the NADPH site. K133 contacts 1-deoxy-D-xylulose 5-phosphate. E134 contributes to the NADPH binding site. A Mn(2+)-binding site is contributed by D156. S157, E158, S182, and H205 together coordinate 1-deoxy-D-xylulose 5-phosphate. E158 provides a ligand contact to Mn(2+). Position 211 (G211) interacts with NADPH. S218, N223, K224, and E227 together coordinate 1-deoxy-D-xylulose 5-phosphate. E227 serves as a coordination point for Mn(2+).

This sequence belongs to the DXR family. The cofactor is Mg(2+). Mn(2+) is required as a cofactor.

It carries out the reaction 2-C-methyl-D-erythritol 4-phosphate + NADP(+) = 1-deoxy-D-xylulose 5-phosphate + NADPH + H(+). It participates in isoprenoid biosynthesis; isopentenyl diphosphate biosynthesis via DXP pathway; isopentenyl diphosphate from 1-deoxy-D-xylulose 5-phosphate: step 1/6. Functionally, catalyzes the NADPH-dependent rearrangement and reduction of 1-deoxy-D-xylulose-5-phosphate (DXP) to 2-C-methyl-D-erythritol 4-phosphate (MEP). The polypeptide is 1-deoxy-D-xylulose 5-phosphate reductoisomerase (Paenarthrobacter aurescens (strain TC1)).